The following is an 88-amino-acid chain: Beta-insect excitatory toxin LqhIT1a (88 aa).

The signal sequence occupies residues 1–18 (MKFFLLFLVVLPIMGVLG). Residues 20 to 83 (KNGYAVDSKG…ISGTTKKYCD (64 aa)) enclose the LCN-type CS-alpha/beta domain. 4 disulfide bridges follow: Cys-34–Cys-55, Cys-40–Cys-60, Cys-44–Cys-62, and Cys-56–Cys-82.

Belongs to the long (4 C-C) scorpion toxin superfamily. Sodium channel inhibitor family. Beta subfamily. Expressed by the venom gland.

It localises to the secreted. Excitatory insect toxins induce a spastic paralysis. They bind voltage-independently at site-4 of sodium channels (Nav) and shift the voltage of activation toward more negative potentials thereby affecting sodium channel activation and promoting spontaneous and repetitive firing. This Leiurus hebraeus (Hebrew deathstalker scorpion) protein is Beta-insect excitatory toxin LqhIT1a.